The chain runs to 431 residues: Divergent protein kinase domain 1B (431 aa).

Residues 1-30 are Cytoplasmic-facing; it reads MRKLRRLVHMVLFCPISKGLQSRLPGIKVK. A May mediate ER retention motif is present at residues 5-6; the sequence is RR. A helical membrane pass occupies residues 31-51; sequence YLFLAWLSVFVGSWVVYMHYS. Residues 52–431 are Lumenal-facing; it reads SYSELCRGHV…WKKISNTKYS (380 aa). Cystine bridges form between C57–C94 and C62–C117.

Belongs to the DIPK family. Among the many cysteines in the lumenal domain, most are probably involved in disulfide bonds.

The protein resides in the endoplasmic reticulum membrane. In Xenopus tropicalis (Western clawed frog), this protein is Divergent protein kinase domain 1B (dipk1b).